The primary structure comprises 271 residues: MNSSQISLRMKHGRVNMQKKPSKCSECGKFFTQRSSLTQHQRIHRGEKPYVCSECGSCFRKQSNLTQHLRIHTGEKPYKCNECEKAFQTKAILVQHLRIHTGEKPYKCNECGKAFCQSPSLIKHQRIHTGEKPYKCTECGKAFSQSICLTRHQRSHSGDKPFKCNECGKAFNQSACLMQHQRIHSGEKPYTCTECGKAFTQNSSLVEHERTHTGEKLYKCSECEKTFRKQAHLSEHYRIHTGEKPYECVGCGKSFRHSSALLRHQRLHAGE.

C2H2-type zinc fingers lie at residues 22-44 (SKCS…QRIH), 50-72 (YVCS…LRIH), 78-100 (YKCN…LRIH), 106-128 (YKCN…QRIH), 134-156 (YKCT…QRSH), 162-184 (FKCN…QRIH), 190-212 (YTCT…ERTH), 218-240 (YKCS…YRIH), and 246-268 (YECV…QRLH).

This sequence belongs to the krueppel C2H2-type zinc-finger protein family.

Its subcellular location is the nucleus. The protein resides in the nucleolus. May be involved in transcriptional regulation. Essential for Golgi structural integrity. The protein is Zinc finger protein 501 (ZNF501) of Homo sapiens (Human).